A 145-amino-acid polypeptide reads, in one-letter code: D-aminoacyl-tRNA deacylase (145 aa).

The Gly-cisPro motif, important for rejection of L-amino acids motif lies at 137–138; that stretch reads GP.

It belongs to the DTD family. Homodimer.

It is found in the cytoplasm. It carries out the reaction glycyl-tRNA(Ala) + H2O = tRNA(Ala) + glycine + H(+). It catalyses the reaction a D-aminoacyl-tRNA + H2O = a tRNA + a D-alpha-amino acid + H(+). Its function is as follows. An aminoacyl-tRNA editing enzyme that deacylates mischarged D-aminoacyl-tRNAs. Also deacylates mischarged glycyl-tRNA(Ala), protecting cells against glycine mischarging by AlaRS. Acts via tRNA-based rather than protein-based catalysis; rejects L-amino acids rather than detecting D-amino acids in the active site. By recycling D-aminoacyl-tRNA to D-amino acids and free tRNA molecules, this enzyme counteracts the toxicity associated with the formation of D-aminoacyl-tRNA entities in vivo and helps enforce protein L-homochirality. The chain is D-aminoacyl-tRNA deacylase from Pseudomonas paraeruginosa (strain DSM 24068 / PA7) (Pseudomonas aeruginosa (strain PA7)).